We begin with the raw amino-acid sequence, 330 residues long: tRNA pseudouridine synthase B (330 aa).

Catalysis depends on Asp-42, which acts as the Nucleophile.

Belongs to the pseudouridine synthase TruB family. Type 1 subfamily.

It carries out the reaction uridine(55) in tRNA = pseudouridine(55) in tRNA. Its function is as follows. Responsible for synthesis of pseudouridine from uracil-55 in the psi GC loop of transfer RNAs. This Lactococcus lactis subsp. cremoris (strain SK11) protein is tRNA pseudouridine synthase B.